A 480-amino-acid chain; its full sequence is Uronate isomerase (480 aa).

Belongs to the metallo-dependent hydrolases superfamily. Uronate isomerase family.

It catalyses the reaction D-glucuronate = D-fructuronate. It carries out the reaction aldehydo-D-galacturonate = keto-D-tagaturonate. The protein operates within carbohydrate metabolism; pentose and glucuronate interconversion. The polypeptide is Uronate isomerase (Phenylobacterium zucineum (strain HLK1)).